We begin with the raw amino-acid sequence, 224 residues long: Glycerol-3-phosphate acyltransferase (224 aa).

6 helical membrane-spanning segments follow: residues 14 to 34 (INMI…GWLL), 70 to 90 (YLSI…VLGA), 99 to 119 (TQWS…YLGF), 129 to 149 (IGSV…IWGI), 162 to 182 (LIGV…LPLP), and 185 to 205 (ISII…LFIF).

It belongs to the PlsY family. In terms of assembly, probably interacts with PlsX.

It localises to the cell inner membrane. It carries out the reaction an acyl phosphate + sn-glycerol 3-phosphate = a 1-acyl-sn-glycero-3-phosphate + phosphate. The protein operates within lipid metabolism; phospholipid metabolism. Its function is as follows. Catalyzes the transfer of an acyl group from acyl-phosphate (acyl-PO(4)) to glycerol-3-phosphate (G3P) to form lysophosphatidic acid (LPA). This enzyme utilizes acyl-phosphate as fatty acyl donor, but not acyl-CoA or acyl-ACP. The chain is Glycerol-3-phosphate acyltransferase from Helicobacter hepaticus (strain ATCC 51449 / 3B1).